Consider the following 352-residue polypeptide: Nicotinate-nucleotide--dimethylbenzimidazole phosphoribosyltransferase (352 aa).

Glu318 (proton acceptor) is an active-site residue.

This sequence belongs to the CobT family.

It catalyses the reaction 5,6-dimethylbenzimidazole + nicotinate beta-D-ribonucleotide = alpha-ribazole 5'-phosphate + nicotinate + H(+). Its pathway is nucleoside biosynthesis; alpha-ribazole biosynthesis; alpha-ribazole from 5,6-dimethylbenzimidazole: step 1/2. In terms of biological role, catalyzes the synthesis of alpha-ribazole-5'-phosphate from nicotinate mononucleotide (NAMN) and 5,6-dimethylbenzimidazole (DMB). This Dehalococcoides mccartyi (strain ATCC BAA-2100 / JCM 16839 / KCTC 5957 / BAV1) protein is Nicotinate-nucleotide--dimethylbenzimidazole phosphoribosyltransferase.